The sequence spans 259 residues: UPF0246 protein Pfl01_0961 (259 aa).

The protein belongs to the UPF0246 family.

In Pseudomonas fluorescens (strain Pf0-1), this protein is UPF0246 protein Pfl01_0961.